A 188-amino-acid polypeptide reads, in one-letter code: Putative 3-methyladenine DNA glycosylase (188 aa).

Belongs to the DNA glycosylase MPG family.

This is Putative 3-methyladenine DNA glycosylase from Ehrlichia ruminantium (strain Gardel).